The chain runs to 1214 residues: Neuronal cell adhesion molecule (1214 aa).

The signal sequence occupies residues 1–29 (MQLKTMPKKKPLSAGRAPLFLFLCQMISA). Residues 30–1077 (LDVPLDPKLL…ASRQVDIATQ (1048 aa)) lie on the Extracellular side of the membrane. Ig-like C2-type domains lie at 46-134 (PTIT…AAVS) and 141-235 (PSRS…QPIS). 2 disulfide bridges follow: Cys68–Cys123 and Cys167–Cys218. N-linked (GlcNAc...) asparagine glycosylation is present at Asn83. 6 N-linked (GlcNAc...) asparagine glycosylation sites follow: Asn223, Asn245, Asn251, Asn276, Asn314, and Asn377. 4 Ig-like C2-type domains span residues 267–356 (PPTF…ISVT), 361–448 (PYWI…AFVN), 454–541 (PRIL…VHLE), and 545–626 (PTRF…DSVS). Residues Cys292 and Cys340 are joined by a disulfide bond. A disulfide bridge connects residues Cys382 and Cys432. Asn433 and Asn507 each carry an N-linked (GlcNAc...) asparagine glycan. Intrachain disulfides connect Cys476-Cys525 and Cys567-Cys616. 7 N-linked (GlcNAc...) asparagine glycosylation sites follow: Asn619, Asn716, Asn802, Asn858, Asn993, Asn1009, and Asn1019. Fibronectin type-III domains are found at residues 649–744 (PPFD…TKAA), 746–843 (PDQN…SGED), 848–950 (APGN…TPEG), and 954–1051 (APSS…VDEG). Residues 1078-1100 (GWFIGLMCAVALLILILLIVCFI) traverse the membrane as a helical segment. At 1101-1214 (RRNKGGKYPV…SPVNAMNSFV (114 aa)) the chain is on the cytoplasmic side. The segment covering 1109–1129 (PVKEKEDAHADPEIQPMKEDD) has biased composition (basic and acidic residues). The tract at residues 1109–1214 (PVKEKEDAHA…SPVNAMNSFV (106 aa)) is disordered. The residue at position 1131 (Thr1131) is a Phosphothreonine. Tyr1135 carries the phosphotyrosine modification. A Phosphoserine modification is found at Ser1136. A compositionally biased stretch (basic and acidic residues) spans 1151-1160 (PSDRTVKKED). Ser1161, Ser1164, Ser1181, Ser1200, Ser1201, and Ser1205 each carry phosphoserine. The span at 1198–1214 (NESSEAPSPVNAMNSFV) shows a compositional bias: polar residues.

The protein belongs to the immunoglobulin superfamily. L1/neurofascin/NgCAM family. Constituent of a NFASC/NRCAM/ankyrin-G complex. Detected in a complex with CNTN1 and PTPRB. Interacts with MYOC. Interacts with GLDN. As to expression, detected in cerebellum Purkinje cells. Detected on nodes of Ranvier and unmyelinated axons in sciatic nerve (at protein level).

Its subcellular location is the cell membrane. It localises to the cell projection. The protein resides in the axon. The protein localises to the secreted. Functionally, cell adhesion protein that is required for normal responses to cell-cell contacts in brain and in the peripheral nervous system. Plays a role in neurite outgrowth in response to contactin binding. Plays a role in mediating cell-cell contacts between Schwann cells and axons. Plays a role in the formation and maintenance of the nodes of Ranvier on myelinated axons. Nodes of Ranvier contain clustered sodium channels that are crucial for the saltatory propagation of action potentials along myelinated axons. During development, nodes of Ranvier are formed by the fusion of two heminodes. Required for normal clustering of sodium channels at heminodes; not required for the formation of mature nodes with normal sodium channel clusters. Required, together with GLDN, for maintaining NFASC and sodium channel clusters at mature nodes of Ranvier. This chain is Neuronal cell adhesion molecule (Nrcam), found in Rattus norvegicus (Rat).